The chain runs to 549 residues: Carboxylesterase 1C (549 aa).

Residues 1-18 (MWLCALVWASLAVCPIWG) form the signal peptide. Asn-79 is a glycosylation site (N-linked (GlcNAc...) asparagine). A disulfide bridge connects residues Cys-87 and Cys-116. Ser-221 serves as the catalytic Acyl-ester intermediate. Cys-273 and Cys-284 are joined by a disulfide. Residues Asn-274, Asn-275, and Asn-302 are each glycosylated (N-linked (GlcNAc...) asparagine). The Charge relay system role is filled by Glu-340. Asn-375 is a glycosylation site (N-linked (GlcNAc...) asparagine). The active-site Charge relay system is His-453. Phosphoserine is present on Ser-471. N-linked (GlcNAc...) asparagine glycosylation occurs at Asn-476. The short motif at 546–549 (TEHT) is the Prevents secretion from ER element.

It belongs to the type-B carboxylesterase/lipase family.

The protein localises to the endoplasmic reticulum lumen. The catalysed reaction is a carboxylic ester + H2O = an alcohol + a carboxylate + H(+). In terms of biological role, involved in the detoxification of xenobiotics and in the activation of ester and amide prodrugs. Involved in the extracellular metabolism of lung surfactant. The polypeptide is Carboxylesterase 1C (Ces1c) (Rattus norvegicus (Rat)).